Consider the following 207-residue polypeptide: Outer-membrane lipoprotein LolB (207 aa).

The signal sequence occupies residues 1-21 (MPLPDFRLIRLLPLAALVLTA). Cys-22 is lipidated: N-palmitoyl cysteine. Cys-22 is lipidated: S-diacylglycerol cysteine.

The protein belongs to the LolB family. As to quaternary structure, monomer.

The protein resides in the cell outer membrane. Its function is as follows. Plays a critical role in the incorporation of lipoproteins in the outer membrane after they are released by the LolA protein. In Escherichia coli O127:H6 (strain E2348/69 / EPEC), this protein is Outer-membrane lipoprotein LolB.